The sequence spans 77 residues: Cell division topological specificity factor (77 aa).

Belongs to the MinE family.

In terms of biological role, prevents the cell division inhibition by proteins MinC and MinD at internal division sites while permitting inhibition at polar sites. This ensures cell division at the proper site by restricting the formation of a division septum at the midpoint of the long axis of the cell. The protein is Cell division topological specificity factor of Nautilia profundicola (strain ATCC BAA-1463 / DSM 18972 / AmH).